The following is a 381-amino-acid chain: Cytochrome b (381 aa).

4 helical membrane-spanning segments follow: residues 34–54 (FGSL…FLAM), 78–99 (WLIR…YLHI), 114–134 (WNIG…GYVL), and 179–199 (FFAF…IHLL). Heme b-binding residues include His-84 and His-98. Positions 183 and 197 each coordinate heme b. His-202 is an a ubiquinone binding site. Helical transmembrane passes span 227 to 247 (YKDL…ALFM), 289 to 309 (LGGV…PLLH), 321 to 341 (LTQI…WIGG), and 348 to 368 (FITV…IIMP).

It belongs to the cytochrome b family. In terms of assembly, the cytochrome bc1 complex contains 3 respiratory subunits (MT-CYB, CYC1 and UQCRFS1), 2 core proteins (UQCRC1 and UQCRC2) and probably 6 low-molecular weight proteins. It depends on heme b as a cofactor.

The protein resides in the mitochondrion inner membrane. Functionally, component of the ubiquinol-cytochrome c reductase complex (complex III or cytochrome b-c1 complex) that is part of the mitochondrial respiratory chain. The b-c1 complex mediates electron transfer from ubiquinol to cytochrome c. Contributes to the generation of a proton gradient across the mitochondrial membrane that is then used for ATP synthesis. This Sphyrna tiburo tiburo (Hammerhead shark) protein is Cytochrome b (mt-cyb).